Reading from the N-terminus, the 289-residue chain is Serine/threonine-protein phosphatase Pgam5, mitochondrial (289 aa).

Residues 7–23 (FACGTGAGLAAYYLQRL) traverse the membrane as a helical segment.

It belongs to the phosphoglycerate mutase family. BPG-dependent PGAM subfamily. In terms of assembly, interacts with Pk92B/ASK1.

The protein resides in the mitochondrion outer membrane. The enzyme catalyses O-phospho-L-seryl-[protein] + H2O = L-seryl-[protein] + phosphate. It catalyses the reaction O-phospho-L-threonyl-[protein] + H2O = L-threonyl-[protein] + phosphate. In terms of biological role, displays phosphatase activity for serine/threonine residues, and dephosphorylates and activates Pk92B kinase. Has apparently no phosphoglycerate mutase activity. This chain is Serine/threonine-protein phosphatase Pgam5, mitochondrial, found in Drosophila simulans (Fruit fly).